The following is a 298-amino-acid chain: Tyrosine recombinase XerC (298 aa).

One can recognise a Core-binding (CB) domain in the interval 1-84; the sequence is MNHIQEAFLN…TLRTLYEYWM (84 aa). A Tyr recombinase domain is found at 105 to 286; sequence YLPQFSLEEE…SNQQLRKVYL (182 aa). Residues arginine 145, lysine 169, histidine 238, arginine 241, and histidine 264 contribute to the active site. The active-site O-(3'-phospho-DNA)-tyrosine intermediate is the tyrosine 273.

It belongs to the 'phage' integrase family. XerC subfamily. Forms a cyclic heterotetrameric complex composed of two molecules of XerC and two molecules of XerD.

The protein resides in the cytoplasm. Functionally, site-specific tyrosine recombinase, which acts by catalyzing the cutting and rejoining of the recombining DNA molecules. The XerC-XerD complex is essential to convert dimers of the bacterial chromosome into monomers to permit their segregation at cell division. It also contributes to the segregational stability of plasmids. In Staphylococcus aureus, this protein is Tyrosine recombinase XerC.